Consider the following 87-residue polypeptide: Small ribosomal subunit protein bS20 (87 aa).

The disordered stretch occupies residues 1–25 (MANIKSAKKRAVQSEKHRLHNASRR).

The protein belongs to the bacterial ribosomal protein bS20 family.

Binds directly to 16S ribosomal RNA. The chain is Small ribosomal subunit protein bS20 from Baumannia cicadellinicola subsp. Homalodisca coagulata.